A 1617-amino-acid polypeptide reads, in one-letter code: ATP-binding cassette sub-family A member 6 (1617 aa).

The chain crosses the membrane as a helical span at residues 31-51 (LLEWGLSILLGLCIALFSSSM). N-linked (GlcNAc...) asparagine glycosylation is found at Asn-84 and Asn-109. Helical transmembrane passes span 222–242 (MFIL…SLNV), 268–288 (GLIY…IITF), 297–317 (FMVI…LVFL), 327–347 (LTNL…FTVF), 355–375 (LEWI…IQII), and 397–417 (IATF…ALYF). Residues 478–713 (IRIRNVKKEY…WGLGYHLSLH (236 aa)) form the ABC transporter 1 domain. 514–521 (GHSGAGKS) is a binding site for ATP. A helical transmembrane segment spans residues 854–874 (VLLTLLLVFGIAIFPLIVENI). N-linked (GlcNAc...) asparagine glycosylation is present at Asn-940. Helical transmembrane passes span 1007–1027 (IGLW…LCSI), 1062–1082 (ALVD…IFYI), 1094–1114 (IVFA…FFIY), 1127–1147 (SGLW…ITLI), 1150–1170 (FDLS…LLGF), and 1194–1214 (ATDF…VFVL). The region spanning 1288–1513 (GQKKSCFSKR…LGKDYILELK (226 aa)) is the ABC transporter 2 domain. ATP is bound at residue 1320–1327 (GPNGAGKS).

The protein belongs to the ABC transporter superfamily. ABCA family. As to expression, widely expressed with higher expression in liver.

It is found in the golgi apparatus membrane. Probable transporter which may play a role in macrophage lipid transport and homeostasis. This is ATP-binding cassette sub-family A member 6 (ABCA6) from Homo sapiens (Human).